Consider the following 73-residue polypeptide: UPF0346 protein lp_1865 (73 aa).

Belongs to the UPF0346 family.

The protein is UPF0346 protein lp_1865 of Lactiplantibacillus plantarum (strain ATCC BAA-793 / NCIMB 8826 / WCFS1) (Lactobacillus plantarum).